A 515-amino-acid chain; its full sequence is 4-hydroxybenzoate brominase (decarboxylating) (515 aa).

FAD-binding residues include Ser13, Glu32, Val40, Phe41, His51, Val102, and Gln364.

This sequence belongs to the FMO family. FAD is required as a cofactor.

The enzyme catalyses 2 bromide + 4-hydroxybenzoate + 2 NADPH + 2 O2 + 5 H(+) = 2,4-dibromophenol + CO2 + 2 NADP(+) + 4 H2O. The catalysed reaction is bromide + 4-hydroxybenzoate + NADPH + O2 + 2 H(+) = 3-bromo-4-hydroxybenzoate + NADP(+) + 2 H2O. It carries out the reaction 3-bromo-4-hydroxybenzoate + bromide + NADPH + O2 + 3 H(+) = 2,4-dibromophenol + CO2 + NADP(+) + 2 H2O. It catalyses the reaction 3,4-dihydroxybenzoate + 2 bromide + 2 NADPH + 2 O2 + 5 H(+) = 3,5-dibromobenzene-1,2-diol + CO2 + 2 NADP(+) + 4 H2O. The enzyme catalyses 3,4-dihydroxybenzoate + bromide + NADPH + O2 + 2 H(+) = 3-bromo-4,5-dihydroxybenzoate + NADP(+) + 2 H2O. The catalysed reaction is 3-bromo-4,5-dihydroxybenzoate + bromide + NADPH + O2 + 3 H(+) = 3,5-dibromobenzene-1,2-diol + CO2 + NADP(+) + 2 H2O. Activity is abolished in the absence of either bromide or NADPH, while a partial reduction in activity is observed upon omission of FAD. Activity does not require the addition of a flavin reductase to regenerate FADH(2) in situ. Brominase involved in the biosynthesis of polybrominated aromatic organic compounds. Catalyzes the bromination of 4-hydroxybenzoate (4-HBA) to 3-bromo-4-hydroxybenzoate, followed by bromination and decarboxylation of 3-bromo-4-hydroxybenzoate to 2,4-dibromophenol. Can also use 3,4-dihydroxybenzoate, with lower efficiency, forming 3-bromo-4,5-dihydroxybenzoate and 3,5-dibromobenzene-1,2-diol. Can utilize iodide in vivo leading to the formation of iodophenols, but cannot use chloride. The chain is 4-hydroxybenzoate brominase (decarboxylating) from Pseudoalteromonas luteoviolacea (strain 2ta16).